The primary structure comprises 761 residues: Neurotrypsin (761 aa).

The first 21 residues, 1-21, serve as a signal peptide directing secretion; the sequence is MALARCVLAVILGVLSEVARA. Residues 26-88 form a disordered region; it reads HSPLHRPHPS…PTISRRCGAG (63 aa). Residues 54 to 63 show a composition bias toward pro residues; sequence TPRFPLPPRA. One can recognise a Kringle domain in the interval 85-157; that stretch reads CGAGEPWGNA…GKVDWGYCDC (73 aa). Intrachain disulfides connect C85–C157, C101–C141, C130–C155, C191–C255, C204–C265, C235–C245, C298–C361, C311–C371, C341–C351, C411–C475, C424–C485, C455–C465, C505–C636, C547–C563, C651–C717, C680–C694, and C707–C736. Residue N93 is glycosylated (N-linked (GlcNAc...) asparagine). SRCR domains are found at residues 166-267, 273-373, and 386-487; these read IRLV…SCAP, IRLS…TCYP, and IRLM…ICDY. Residues 505 to 516 form a zymogen activation region region; that stretch reads CGLRLLHRRQKR. Residues 517 to 760 form the Peptidase S1 domain; it reads IIGGNNSLRG…FVPWIKSVTS (244 aa). N521 carries N-linked (GlcNAc...) asparagine glycosylation. The Charge relay system role is filled by H562. N569 carries an N-linked (GlcNAc...) asparagine glycan. D612 functions as the Charge relay system in the catalytic mechanism. The Charge relay system role is filled by S711.

It belongs to the peptidase S1 family.

Its subcellular location is the secreted. Plays a role in neuronal plasticity and the proteolytic action may subserve structural reorganizations associated with learning and memory operations. This Rattus norvegicus (Rat) protein is Neurotrypsin (Prss12).